A 241-amino-acid polypeptide reads, in one-letter code: Fatty acid metabolism regulator protein (241 aa).

Residues 11–79 (QSPAALAEEY…HGKPTKVNNI (69 aa)) enclose the HTH gntR-type domain. The H-T-H motif DNA-binding region spans 39–58 (ERDLADKIGVTRTTLREVLQ).

Homodimer.

It localises to the cytoplasm. Its function is as follows. Multifunctional regulator of fatty acid metabolism. The chain is Fatty acid metabolism regulator protein from Haemophilus influenzae (strain 86-028NP).